The sequence spans 72 residues: Holocyclotoxin-1 (72 aa).

The first 22 residues, 1 to 22 (MSKVTTVFIGALVLLLLIENGF), serve as a signal peptide directing secretion. Disulfide bonds link Cys24–Cys40, Cys32–Cys57, Cys36–Cys60, and Cys42–Cys70.

In terms of tissue distribution, expressed in salivary glands.

It is found in the secreted. Probable neurotoxin. The sequence is that of Holocyclotoxin-1 from Ixodes holocyclus (Australian paralysis tick).